We begin with the raw amino-acid sequence, 733 residues long: Arginine decarboxylase 1A, chloroplastic (733 aa).

A chloroplast-targeting transit peptide spans 1–44; sequence MPALGCCVDAAVSPPPGYSFLWDSSLPAPEIFPSGVPPSTNTAV. Residue K157 is modified to N6-(pyridoxal phosphate)lysine. Pyridoxal 5'-phosphate-binding positions include S309, G346, and 395–398; that span reads ESGR. 460–461 is a binding site for substrate; it reads YA. The active-site Proton donor; shared with dimeric partner is the C548. Residue D549 participates in substrate binding. Y592 serves as a coordination point for pyridoxal 5'-phosphate.

It belongs to the Orn/Lys/Arg decarboxylase class-II family. SpeA subfamily. In terms of assembly, interacts, via its C-terminal internal region, with the tobacco mosaic virus (TMV) replicase helicase region. Mg(2+) serves as cofactor. It depends on pyridoxal 5'-phosphate as a cofactor.

It localises to the plastid. Its subcellular location is the chloroplast. The catalysed reaction is L-arginine + H(+) = agmatine + CO2. It participates in alkaloid biosynthesis; nicotine biosynthesis. Its pathway is amine and polyamine biosynthesis; agmatine biosynthesis; agmatine from L-arginine: step 1/1. Functionally, involved in the biosynthesis of pyridine alkaloid natural products, leading mainly to the production of anabasine, anatabine, nicotine and nornicotine, effective deterrents against herbivores with antiparasitic and pesticide properties (neurotoxins); nornicotine serves as the precursor in the synthesis of the carcinogen compound N'-nitrosonornicotine (NNN). Required for the biosynthesis of putrescine. Catalyzes the first step of polyamine (PA) biosynthesis to produce putrescine from arginine. The sequence is that of Arginine decarboxylase 1A, chloroplastic from Nicotiana tabacum (Common tobacco).